A 258-amino-acid chain; its full sequence is MSILFYVIFLAYLRGIQGNSMDQRSLPEDSLNSLIIKLIQADILKNKLSKQMVDVKENYQSTLPKAEAPREPEQGEATRSEFQPMIATDTELLRQQRRYNSPRVLLSDSTPLEPPPLYLMEDYVGNPVVANRTSPRRKRYAEHKSHRGEYSVCDSESLWVTDKSSAIDIRGHQVTVLGEIKTGNSPVKQYFYETRCKEARPVKNGCRGIDDKHWNSQCKTSQTYVRALTSENNKLVGWRWIRIDTSCVCALSRKIGRT.

An N-terminal signal peptide occupies residues 1-18 (MSILFYVIFLAYLRGIQG). A propeptide spanning residues 19 to 139 (NSMDQRSLPE…ANRTSPRRKR (121 aa)) is cleaved from the precursor. The tract at residues 60–85 (QSTLPKAEAPREPEQGEATRSEFQPM) is disordered. Positions 67–79 (EAPREPEQGEATR) are enriched in basic and acidic residues. Asn-131 carries N-linked (GlcNAc...) asparagine glycosylation. 3 cysteine pairs are disulfide-bonded: Cys-153–Cys-218, Cys-196–Cys-247, and Cys-206–Cys-249.

The protein belongs to the NGF-beta family. As to expression, brain and peripheral tissues.

Its subcellular location is the secreted. Seems to promote the survival of visceral and proprioceptive sensory neurons. This is Neurotrophin-3 (Ntf3) from Mus musculus (Mouse).